Reading from the N-terminus, the 89-residue chain is Small ribosomal subunit protein uS14 (89 aa).

This sequence belongs to the universal ribosomal protein uS14 family. In terms of assembly, part of the 30S ribosomal subunit. Contacts proteins S3 and S10.

Binds 16S rRNA, required for the assembly of 30S particles and may also be responsible for determining the conformation of the 16S rRNA at the A site. The chain is Small ribosomal subunit protein uS14 from Onion yellows phytoplasma (strain OY-M).